The primary structure comprises 355 residues: MRPIDIRPDKLAQEMLDYTSKLGQGMENLLNADAIDTGVSPKEAVYSEDKLVLYRYDTPAGVTPQKTPLLIVYALVNRPYMTDIQEDRSTIKGLLATGQDVYLIDWGYPDQADSALTLDDYINGYIDSCVDYLCETHEVDQVNILGICQGGAFSLMYASLHPDKVKNLVTMVTPVDFKTPGNLLSAWVQNVDIDLAVDTMGNIPGELLNWTFLSLKPFSLTGQKYVNMVDMLDDPDKVKNFLRMEKWIFDSPDQAGETFRQFTKDFYQKNGFINGGVKLGGKEIDLKNVDCPVLNIYALQDHLVPPDASKALNPWSAARTYTELAFPGGHIGIYVSGKAQKEVTPAIGKWLNERS.

In terms of domain architecture, AB hydrolase-1 spans 68–333; that stretch reads PLLIVYALVN…LAFPGGHIGI (266 aa). Cys-148 is a catalytic residue.

It belongs to the PHA/PHB synthase family. Type III PhaC subfamily. As to quaternary structure, forms a heterodimer with PhaE, which may multimerize in the presence of 3-hydroxybutyryl-CoA.

It is found in the cytoplasm. It catalyses the reaction (3R)-3-hydroxybutanoyl-CoA + [(3R)-hydroxybutanoate](n) = [(3R)-hydroxybutanoate](n+1) + CoA. The protein operates within biopolymer metabolism; poly-(R)-3-hydroxybutanoate biosynthesis. In terms of biological role, polymerizes D(-)-3-hydroxybutyryl-CoA to create PHB which consists of thousands of hydroxybutyrate molecules linked end to end. PHB serves as an intracellular energy reserve material when cells grow under conditions of nutrient limitation. The protein is Poly(3-hydroxyalkanoate) polymerase subunit PhaC of Thiocystis violacea.